We begin with the raw amino-acid sequence, 153 residues long: ATP synthase subunit b' (153 aa).

Residues 20–40 (TLPLMAAQVVLLTFILNALFF) traverse the membrane as a helical segment.

This sequence belongs to the ATPase B chain family. F-type ATPases have 2 components, F(1) - the catalytic core - and F(0) - the membrane proton channel. F(1) has five subunits: alpha(3), beta(3), gamma(1), delta(1), epsilon(1). F(0) has four main subunits: a(1), b(1), b'(1) and c(10-14). The alpha and beta chains form an alternating ring which encloses part of the gamma chain. F(1) is attached to F(0) by a central stalk formed by the gamma and epsilon chains, while a peripheral stalk is formed by the delta, b and b' chains.

It is found in the cellular thylakoid membrane. F(1)F(0) ATP synthase produces ATP from ADP in the presence of a proton or sodium gradient. F-type ATPases consist of two structural domains, F(1) containing the extramembraneous catalytic core and F(0) containing the membrane proton channel, linked together by a central stalk and a peripheral stalk. During catalysis, ATP synthesis in the catalytic domain of F(1) is coupled via a rotary mechanism of the central stalk subunits to proton translocation. In terms of biological role, component of the F(0) channel, it forms part of the peripheral stalk, linking F(1) to F(0). The b'-subunit is a diverged and duplicated form of b found in plants and photosynthetic bacteria. The sequence is that of ATP synthase subunit b' from Prochlorococcus marinus (strain SARG / CCMP1375 / SS120).